A 469-amino-acid polypeptide reads, in one-letter code: Glutamate--tRNA ligase (469 aa).

The 'HIGH' region motif lies at 9-19 (PSPTGFLHVGG). Zn(2+) is bound by residues cysteine 98, cysteine 100, cysteine 125, and aspartate 127. The 'KMSKS' region signature appears at 236-240 (KLSKR). Position 239 (lysine 239) interacts with ATP.

Belongs to the class-I aminoacyl-tRNA synthetase family. Glutamate--tRNA ligase type 1 subfamily. As to quaternary structure, monomer. Requires Zn(2+) as cofactor.

The protein localises to the cytoplasm. The catalysed reaction is tRNA(Glu) + L-glutamate + ATP = L-glutamyl-tRNA(Glu) + AMP + diphosphate. In terms of biological role, catalyzes the attachment of glutamate to tRNA(Glu) in a two-step reaction: glutamate is first activated by ATP to form Glu-AMP and then transferred to the acceptor end of tRNA(Glu). This Shewanella sp. (strain ANA-3) protein is Glutamate--tRNA ligase.